Here is a 116-residue protein sequence, read N- to C-terminus: Nitrogenase-stabilizing/protective protein NifW (116 aa).

The protein belongs to the NifW family. As to quaternary structure, homotrimer; associates with NifD.

May protect the nitrogenase Fe-Mo protein from oxidative damage. The polypeptide is Nitrogenase-stabilizing/protective protein NifW (Rhodopseudomonas palustris (strain ATCC BAA-98 / CGA009)).